The following is a 105-amino-acid chain: Large ribosomal subunit protein eL42z/eL42y (105 aa).

The tract at residues 28 to 57 (YKKGKDSLAAQGKRRYDRKQSGYGGQTKPV) is disordered.

The protein belongs to the eukaryotic ribosomal protein eL42 family.

The sequence is that of Large ribosomal subunit protein eL42z/eL42y (RPL36AA) from Arabidopsis thaliana (Mouse-ear cress).